We begin with the raw amino-acid sequence, 618 residues long: Chaperone protein HscA homolog (618 aa).

This sequence belongs to the heat shock protein 70 family.

Its function is as follows. Chaperone involved in the maturation of iron-sulfur cluster-containing proteins. Has a low intrinsic ATPase activity which is markedly stimulated by HscB. The sequence is that of Chaperone protein HscA homolog from Methylibium petroleiphilum (strain ATCC BAA-1232 / LMG 22953 / PM1).